We begin with the raw amino-acid sequence, 310 residues long: Apolipoprotein E (310 aa).

The first 18 residues, Met1–Ser18, serve as a signal peptide directing secretion. Tandem repeats lie at residues Val72–Gly93, Pro94–Gly115, Ala116–Gly137, Gln138–Met159, Arg160–Glu181, Arg182–Ala203, Asn204–Arg225, and Gly226–Glu247. The tract at residues Val72–Glu247 is 8 X 22 AA approximate tandem repeats. Met135 is modified (methionine sulfoxide). The tract at residues His150 to Arg160 is LDL and other lipoprotein receptors binding. The tract at residues His150–Arg160 is LDL receptor binding. Met154–Arg157 is a heparin binding site. The lipid-binding and lipoprotein association stretch occupies residues Thr202–Met282. A heparin-binding site is contributed by Gly221 to Leu228. The tract at residues Gln258–Gln310 is homooligomerization. The tract at residues Arg270–Met282 is specificity for association with VLDL.

The protein belongs to the apolipoprotein A1/A4/E family. Homotetramer. May interact with ABCA1; functionally associated with ABCA1 in the biogenesis of HDLs. May interact with APP/A4 amyloid-beta peptide; the interaction is extremely stable in vitro but its physiological significance is unclear. May interact with MAPT. May interact with MAP2. In the cerebrospinal fluid, interacts with secreted SORL1. Interacts with PMEL; this allows the loading of PMEL luminal fragment on ILVs to induce fibril nucleation. Post-translationally, APOE exists as multiple glycosylated and sialylated glycoforms within cells and in plasma. The extent of glycosylation and sialylation are tissue and context specific. Glycated in plasma VLDL. In terms of processing, phosphorylated by FAM20C in the extracellular medium.

Its subcellular location is the secreted. The protein localises to the extracellular space. The protein resides in the extracellular matrix. It localises to the extracellular vesicle. It is found in the endosome. Its subcellular location is the multivesicular body. In terms of biological role, APOE is an apolipoprotein, a protein associating with lipid particles, that mainly functions in lipoprotein-mediated lipid transport between organs via the plasma and interstitial fluids. APOE is a core component of plasma lipoproteins and is involved in their production, conversion and clearance. Apolipoproteins are amphipathic molecules that interact both with lipids of the lipoprotein particle core and the aqueous environment of the plasma. As such, APOE associates with chylomicrons, chylomicron remnants, very low density lipoproteins (VLDL) and intermediate density lipoproteins (IDL) but shows a preferential binding to high-density lipoproteins (HDL). It also binds a wide range of cellular receptors including the LDL receptor/LDLR, the LDL receptor-related proteins LRP1, LRP2 and LRP8 and the very low-density lipoprotein receptor/VLDLR that mediate the cellular uptake of the APOE-containing lipoprotein particles. Finally, APOE also has a heparin-binding activity and binds heparan-sulfate proteoglycans on the surface of cells, a property that supports the capture and the receptor-mediated uptake of APOE-containing lipoproteins by cells. A main function of APOE is to mediate lipoprotein clearance through the uptake of chylomicrons, VLDLs, and HDLs by hepatocytes. APOE is also involved in the biosynthesis by the liver of VLDLs as well as their uptake by peripheral tissues ensuring the delivery of triglycerides and energy storage in muscle, heart and adipose tissues. By participating in the lipoprotein-mediated distribution of lipids among tissues, APOE plays a critical role in plasma and tissues lipid homeostasis. APOE is also involved in two steps of reverse cholesterol transport, the HDLs-mediated transport of cholesterol from peripheral tissues to the liver, and thereby plays an important role in cholesterol homeostasis. First, it is functionally associated with ABCA1 in the biogenesis of HDLs in tissues. Second, it is enriched in circulating HDLs and mediates their uptake by hepatocytes. APOE also plays an important role in lipid transport in the central nervous system, regulating neuron survival and sprouting. This is Apolipoprotein E (Apoe) from Grammomys surdaster (African woodland thicket rat).